Consider the following 84-residue polypeptide: MAHKKAGGSTRNGRDSESKRLGVKRFGGESVLAGNIIVRQRGTKFHAGVNVGVGRDHTLFALTDGKVKFEVKGPNNRKFISIEA.

Residues 1 to 22 are disordered; that stretch reads MAHKKAGGSTRNGRDSESKRLG.

This sequence belongs to the bacterial ribosomal protein bL27 family.

In Shewanella sp. (strain MR-4), this protein is Large ribosomal subunit protein bL27.